Consider the following 332-residue polypeptide: Malate dehydrogenase 1, cytoplasmic (332 aa).

Residues 16–17 and Asp-43 each bind NAD(+); that span reads QI. Position 56 is a methionine sulfoxide (Met-56). NAD(+) is bound at residue Gly-90. A Methionine sulfoxide modification is found at Met-97. Arg-99 contributes to the oxaloacetate binding site. Gln-113 lines the NAD(+) pocket. Lys-119 participates in a covalent cross-link: Glycyl lysine isopeptide (Lys-Gly) (interchain with G-Cter in ubiquitin). Asn-132 contributes to the NAD(+) binding site. Positions 132, 163, 188, and 243 each coordinate oxaloacetate. His-188 acts as the Proton acceptor in catalysis.

It belongs to the LDH/MDH superfamily. MDH type 2 family. Forms a homodimer. Forms a disulfide-linked homodimer upon oxidation. Interacts with 14-3-3-like proteins GRF1 GRF3 and GRF8. Interacts with TRX1, TRX2, TRX3, TRX4 and TRX5. As to expression, expressed in rosette leaves.

The protein resides in the cytoplasm. It carries out the reaction (S)-malate + NAD(+) = oxaloacetate + NADH + H(+). With respect to regulation, decreased activity upon treatment with hydrogen peroxide. In terms of biological role, catalyzes a reversible NAD-dependent dehydrogenase reaction involved in central metabolism and redox homeostasis between organellar compartments. This chain is Malate dehydrogenase 1, cytoplasmic (MDH1), found in Arabidopsis thaliana (Mouse-ear cress).